Consider the following 118-residue polypeptide: T cell receptor gamma variable 3 (118 aa).

The signal sequence occupies residues 1–17 (MRWALLVLLAFLSPASQ). One can recognise an Ig-like domain in the interval 18–118 (KSSNLEGRTK…GVYYCATWDR (101 aa)). An intrachain disulfide couples C41 to C113. Residue N106 is glycosylated (N-linked (GlcNAc...) asparagine).

Gamma-delta TR is a heterodimer composed of a gamma and delta chain; disulfide-linked. The gamma-delta TR is associated with the transmembrane signaling CD3 coreceptor proteins following the stoichiometry: a single gamma-delta TR heterodimer associates with one CD3D-CD3E heterodimer, one CD3G-CD3E heterodimer and one CD247 homodimer forming a stable octameric structure. Upon activation, gamma-delta TR complex associates with FCER1G to initiate intracellular signaling.

The protein resides in the cell membrane. V region of the variable domain of T cell receptor (TR) gamma chain that participates in the antigen recognition. Gamma-delta TRs recognize a variety of self and foreign non-peptide antigens frequently expressed at the epithelial boundaries between the host and external environment, including endogenous lipids presented by MH-like protein CD1D and phosphoantigens presented by butyrophilin-like molecule BTN3A1. Upon antigen recognition induces rapid, innate-like immune responses involved in pathogen clearance and tissue repair. Binding of gamma-delta TR complex to antigen triggers phosphorylation of immunoreceptor tyrosine-based activation motifs (ITAMs) in the CD3 chains by the LCK and FYN kinases, allowing the recruitment, phosphorylation, and activation of ZAP70 that facilitates phosphorylation of the scaffolding proteins LCP2 and LAT. This lead to the formation of a supramolecular signalosome that recruits the phospholipase PLCG1, resulting in calcium mobilization and ERK activation, ultimately leading to T cell expansion and differentiation into effector cells. Gamma-delta TRs are produced through somatic rearrangement of a limited repertoire of variable (V), diversity (D), and joining (J) genes. The potential diversity of gamma-delta TRs is conferred by the unique ability to rearrange (D) genes in tandem and to utilize all three reading frames. The combinatorial diversity is considerably increased by the sequence exonuclease trimming and random nucleotide (N) region additions which occur during the V-(D)-J rearrangements. This chain is T cell receptor gamma variable 3, found in Homo sapiens (Human).